A 68-amino-acid polypeptide reads, in one-letter code: Large ribosomal subunit protein bL35 (68 aa).

Belongs to the bacterial ribosomal protein bL35 family.

This is Large ribosomal subunit protein bL35 from Aster yellows witches'-broom phytoplasma (strain AYWB).